Consider the following 288-residue polypeptide: MRIIVPATSANIGPGFDSIGVALSKYLIIEVLEESTEWLVEHNLVNIPKDHTNLLIQTALHVKSDLAPHRLKMFSDIPLARGLGSSSSVIVAGIELANQLGNLALSQKEKLEIATRLEGHPDNVAPAIFGDLVISSIVKNDIKSLEVMFPDSSFIAFIPNYELKTSDSRNVLPQKLSYEDAVASSSVANVMVASLLKGDLVTAGWAIERDLFHERYRQPLVKEFEVIKQISTQNGAYATYLSGAGPTVMVLCSKEKEQAIVTELSKLCLGGQIQVLNIERKGVRVEKR.

78–88 (PLARGLGSSSS) provides a ligand contact to ATP.

It belongs to the GHMP kinase family. Homoserine kinase subfamily.

It localises to the cytoplasm. The catalysed reaction is L-homoserine + ATP = O-phospho-L-homoserine + ADP + H(+). It participates in amino-acid biosynthesis; L-threonine biosynthesis; L-threonine from L-aspartate: step 4/5. Functionally, catalyzes the ATP-dependent phosphorylation of L-homoserine to L-homoserine phosphate. The chain is Homoserine kinase from Streptococcus agalactiae serotype V (strain ATCC BAA-611 / 2603 V/R).